The primary structure comprises 61 residues: Small ribosomal subunit protein uS14 (61 aa).

Zn(2+)-binding residues include cysteine 24, cysteine 27, cysteine 40, and cysteine 43.

This sequence belongs to the universal ribosomal protein uS14 family. Zinc-binding uS14 subfamily. As to quaternary structure, part of the 30S ribosomal subunit. Contacts proteins S3 and S10. It depends on Zn(2+) as a cofactor.

In terms of biological role, binds 16S rRNA, required for the assembly of 30S particles and may also be responsible for determining the conformation of the 16S rRNA at the A site. This chain is Small ribosomal subunit protein uS14, found in Desulfosudis oleivorans (strain DSM 6200 / JCM 39069 / Hxd3) (Desulfococcus oleovorans).